The chain runs to 443 residues: Chromosomal replication initiator protein DnaA (443 aa).

The interval 1–73 is domain I, interacts with DnaA modulators; sequence MYGDHRQIWE…YDAASKATNK (73 aa). Positions 73-106 are domain II; sequence KLYEIKILSEDEEEYREIKESIEKENLTESTTLS. The segment at 107-323 is domain III, AAA+ region; that stretch reads TLNPKYTFDT…GALIRIVAFS (217 aa). ATP is bound by residues Gly151, Gly153, Lys154, and Thr155. The interval 324 to 443 is domain IV, binds dsDNA; that stretch reads NLTKANIDLE…EELKKRIKGY (120 aa).

This sequence belongs to the DnaA family. As to quaternary structure, oligomerizes as a right-handed, spiral filament on DNA at oriC.

It is found in the cytoplasm. Its function is as follows. Plays an essential role in the initiation and regulation of chromosomal replication. ATP-DnaA binds to the origin of replication (oriC) to initiate formation of the DNA replication initiation complex once per cell cycle. Binds the DnaA box (a 9 base pair repeat at the origin) and separates the double-stranded (ds)DNA. Forms a right-handed helical filament on oriC DNA; dsDNA binds to the exterior of the filament while single-stranded (ss)DNA is stabiized in the filament's interior. The ATP-DnaA-oriC complex binds and stabilizes one strand of the AT-rich DNA unwinding element (DUE), permitting loading of DNA polymerase. After initiation quickly degrades to an ADP-DnaA complex that is not apt for DNA replication. Binds acidic phospholipids. This chain is Chromosomal replication initiator protein DnaA, found in Thermoanaerobacter pseudethanolicus (strain ATCC 33223 / 39E) (Clostridium thermohydrosulfuricum).